Consider the following 156-residue polypeptide: Small ribosomal subunit protein uS7 (156 aa).

This sequence belongs to the universal ribosomal protein uS7 family. In terms of assembly, part of the 30S ribosomal subunit. Contacts proteins S9 and S11.

Its function is as follows. One of the primary rRNA binding proteins, it binds directly to 16S rRNA where it nucleates assembly of the head domain of the 30S subunit. Is located at the subunit interface close to the decoding center, probably blocks exit of the E-site tRNA. The polypeptide is Small ribosomal subunit protein uS7 (Shewanella sediminis (strain HAW-EB3)).